The sequence spans 203 residues: Peptide deformylase (203 aa).

The Fe cation site is built by Cys121 and His163. The active site involves Glu164. Residue His167 participates in Fe cation binding.

This sequence belongs to the polypeptide deformylase family. It depends on Fe(2+) as a cofactor.

The catalysed reaction is N-terminal N-formyl-L-methionyl-[peptide] + H2O = N-terminal L-methionyl-[peptide] + formate. Removes the formyl group from the N-terminal Met of newly synthesized proteins. Requires at least a dipeptide for an efficient rate of reaction. N-terminal L-methionine is a prerequisite for activity but the enzyme has broad specificity at other positions. This is Peptide deformylase from Prochlorococcus marinus (strain MIT 9515).